A 142-amino-acid chain; its full sequence is Ribosome maturation factor RimP (142 aa).

Belongs to the RimP family.

Its subcellular location is the cytoplasm. Functionally, required for maturation of 30S ribosomal subunits. This chain is Ribosome maturation factor RimP, found in Nitrosospira multiformis (strain ATCC 25196 / NCIMB 11849 / C 71).